A 125-amino-acid polypeptide reads, in one-letter code: Mesotocin-neurophysin MT (125 aa).

Positions M1–A19 are cleaved as a signal peptide. C20 and C25 are joined by a disulfide. At G28 the chain carries Glycine amide. 7 cysteine pairs are disulfide-bonded: C42-C86, C45-C59, C53-C76, C60-C66, C93-C106, C100-C118, and C107-C112.

The protein belongs to the vasopressin/oxytocin family. Mesotocin is produced by magnocellular preoptic neurons in the hypothalamus in amphibians, reptiles and birds.

It is found in the secreted. In terms of biological role, mesotocin is a diuretic hormone. The polypeptide is Mesotocin-neurophysin MT (Bufo japonicus (Japanese common toad)).